The chain runs to 66 residues: Large ribosomal subunit protein bL35 (66 aa).

The protein belongs to the bacterial ribosomal protein bL35 family.

In Moorella thermoacetica (strain ATCC 39073 / JCM 9320), this protein is Large ribosomal subunit protein bL35.